We begin with the raw amino-acid sequence, 523 residues long: GMP synthase [glutamine-hydrolyzing] (523 aa).

The Glutamine amidotransferase type-1 domain occupies 8–205 (KILILDFGSQ…VVKICGCERN (198 aa)). Cys-85 functions as the Nucleophile in the catalytic mechanism. Residues His-179 and Glu-181 contribute to the active site. In terms of domain architecture, GMPS ATP-PPase spans 206-398 (WTPENIIEDA…LGLPAEMLNR (193 aa)). Position 233 to 239 (233 to 239 (SGGVDSS)) interacts with ATP.

As to quaternary structure, homodimer.

The catalysed reaction is XMP + L-glutamine + ATP + H2O = GMP + L-glutamate + AMP + diphosphate + 2 H(+). The protein operates within purine metabolism; GMP biosynthesis; GMP from XMP (L-Gln route): step 1/1. Functionally, catalyzes the synthesis of GMP from XMP. This Pasteurella multocida (strain Pm70) protein is GMP synthase [glutamine-hydrolyzing].